A 158-amino-acid chain; its full sequence is NAD(P)H-quinone oxidoreductase subunit J, chloroplastic (158 aa).

It belongs to the complex I 30 kDa subunit family. As to quaternary structure, NDH is composed of at least 16 different subunits, 5 of which are encoded in the nucleus.

It is found in the plastid. The protein localises to the chloroplast thylakoid membrane. It catalyses the reaction a plastoquinone + NADH + (n+1) H(+)(in) = a plastoquinol + NAD(+) + n H(+)(out). The enzyme catalyses a plastoquinone + NADPH + (n+1) H(+)(in) = a plastoquinol + NADP(+) + n H(+)(out). NDH shuttles electrons from NAD(P)H:plastoquinone, via FMN and iron-sulfur (Fe-S) centers, to quinones in the photosynthetic chain and possibly in a chloroplast respiratory chain. The immediate electron acceptor for the enzyme in this species is believed to be plastoquinone. Couples the redox reaction to proton translocation, and thus conserves the redox energy in a proton gradient. The chain is NAD(P)H-quinone oxidoreductase subunit J, chloroplastic from Draba nemorosa (Woodland whitlowgrass).